The primary structure comprises 299 residues: Regucalcin (299 aa).

Glu18 lines the a divalent metal cation pocket. Arg101, Asn103, and Glu121 together coordinate substrate. Lys144 bears the N6-succinyllysine mark. A divalent metal cation-binding residues include Asn154 and Asp204. Asp204 (proton donor/acceptor) is an active-site residue. N6-succinyllysine is present on residues Lys244 and Lys253.

This sequence belongs to the SMP-30/CGR1 family. Monomer. The cofactor is Zn(2+). Mn(2+) is required as a cofactor. Requires Ca(2+) as cofactor. It depends on Mg(2+) as a cofactor.

The protein resides in the cytoplasm. The enzyme catalyses D-glucono-1,5-lactone + H2O = D-gluconate + H(+). Its function is as follows. Gluconolactonase with low activity towards other sugar lactones, including gulonolactone and galactonolactone. Can also hydrolyze diisopropyl phosphorofluoridate and phenylacetate (in vitro). Calcium-binding protein. Modulates Ca(2+) signaling, and Ca(2+)-dependent cellular processes and enzyme activities. This chain is Regucalcin (RGN), found in Homo sapiens (Human).